The primary structure comprises 284 residues: F-box protein PP2-B5 (284 aa).

An F-box domain is found at 32–80 (ASFDDLPDDCLAIISSFTSTPRDAFLAALVSKSFGLQFNSDSVWEKFLP).

In Arabidopsis thaliana (Mouse-ear cress), this protein is F-box protein PP2-B5 (PP2B5).